A 1218-amino-acid chain; its full sequence is Probable RNA-dependent RNA polymerase SHL2 (1218 aa).

This sequence belongs to the RdRP family.

The enzyme catalyses RNA(n) + a ribonucleoside 5'-triphosphate = RNA(n+1) + diphosphate. In terms of biological role, involved in the RNA silencing pathway. Probably required for the generation of small interfering RNAs (siRNAs). Regulates shoot apical meristem (SAM) initiation and maintenance and leaf polarization through the trans-acting siRNAS (ta-siRNAs) pathway which probably modulates the expression of the ARF2, ARF3, ARF4, ARF14 and ARF15 genes. This chain is Probable RNA-dependent RNA polymerase SHL2 (SHL2), found in Oryza sativa subsp. japonica (Rice).